A 203-amino-acid chain; its full sequence is MKSRNGPLRVGIGGPVGSGKTALTEKLCKAMRDDYSVAVVTNDIYTTEDAEALVRMQALPSDRIVGVETGGCPHTAIREDATINLQAIAGLNERIPDLDVVFIESGGDNLAATFSPDLADITIYVISVCQGEEIPRKGGPGITRSDLLVINKKDLAPYVGADLEVMDRDATRMRASRPFVFSDMKRGDGVSSIVNFLREQGGL.

14–21 (GPVGSGKT) serves as a coordination point for GTP.

Belongs to the SIMIBI class G3E GTPase family. UreG subfamily. As to quaternary structure, homodimer. UreD, UreF and UreG form a complex that acts as a GTP-hydrolysis-dependent molecular chaperone, activating the urease apoprotein by helping to assemble the nickel containing metallocenter of UreC. The UreE protein probably delivers the nickel.

The protein localises to the cytoplasm. Functionally, facilitates the functional incorporation of the urease nickel metallocenter. This process requires GTP hydrolysis, probably effectuated by UreG. In Rhizobium etli (strain ATCC 51251 / DSM 11541 / JCM 21823 / NBRC 15573 / CFN 42), this protein is Urease accessory protein UreG.